Here is a 428-residue protein sequence, read N- to C-terminus: Glutamyl-tRNA reductase (428 aa).

Residues 49–52, Ser-109, 114–116, and Gln-120 each bind substrate; these read TCNR and EGQ. The active-site Nucleophile is the Cys-50. Position 189–194 (189–194) interacts with NADP(+); the sequence is GAGKMS.

The protein belongs to the glutamyl-tRNA reductase family. Homodimer.

It catalyses the reaction (S)-4-amino-5-oxopentanoate + tRNA(Glu) + NADP(+) = L-glutamyl-tRNA(Glu) + NADPH + H(+). It participates in porphyrin-containing compound metabolism; protoporphyrin-IX biosynthesis; 5-aminolevulinate from L-glutamyl-tRNA(Glu): step 1/2. The protein operates within porphyrin-containing compound metabolism; chlorophyll biosynthesis. Catalyzes the NADPH-dependent reduction of glutamyl-tRNA(Glu) to glutamate 1-semialdehyde (GSA). The sequence is that of Glutamyl-tRNA reductase from Microcystis aeruginosa (strain NIES-843 / IAM M-2473).